Here is a 208-residue protein sequence, read N- to C-terminus: FMN-dependent NADH:quinone oxidoreductase 4 (208 aa).

It belongs to the azoreductase type 1 family. In terms of assembly, homodimer. Requires FMN as cofactor.

The enzyme catalyses 2 a quinone + NADH + H(+) = 2 a 1,4-benzosemiquinone + NAD(+). It catalyses the reaction N,N-dimethyl-1,4-phenylenediamine + anthranilate + 2 NAD(+) = 2-(4-dimethylaminophenyl)diazenylbenzoate + 2 NADH + 2 H(+). Quinone reductase that provides resistance to thiol-specific stress caused by electrophilic quinones. In terms of biological role, also exhibits azoreductase activity. Catalyzes the reductive cleavage of the azo bond in aromatic azo compounds to the corresponding amines. The protein is FMN-dependent NADH:quinone oxidoreductase 4 of Bacillus cereus (strain ATCC 10987 / NRS 248).